The following is a 398-amino-acid chain: MQKDASSSGFLPSFQHFATQAIHVGPEPEQWSSRAVVLPISLATTFKQDSPGQSSGFVYSRSGNPTRNCLEKAVAALDGAKHCLTFARGLAATTTITHLLKAGDEVICMDEVYGGTNRYFRRVASEFGLKISFVDCSKTKLLEAAITPQTKLVWIETPTNPTLKLADIKACAQIVHKHKDIILVVDNTFMSAYFQRPLALGADICMCSATKYMNGHSDVVMGLVSVTSDDLNERLRFLQNSLGAVPSPFDCYLCCRGLKTLQIRMEKHFRNGMAVARFLESNPRVEKVIYPGLPSHPQHELAKRQCTGCPGMVSFYIKGTLQHAQVFLKNIKLFALAESLGGYESLAELPAIMTHASVPEKDRATLGISDTLIRLSVGLEDEKDLLEDLGQALKAAHP.

Ser50 carries the phosphoserine modification. Substrate-binding residues include Arg61, Tyr113, and Arg118. Lys211 carries the N6-(pyridoxal phosphate)lysine modification. Glu338 provides a ligand contact to substrate.

Belongs to the trans-sulfuration enzymes family. Homotetramer. Interacts with CALM in a calcium-dependent manner. It depends on pyridoxal 5'-phosphate as a cofactor.

Its subcellular location is the cytoplasm. The catalysed reaction is L,L-cystathionine + H2O = 2-oxobutanoate + L-cysteine + NH4(+). The enzyme catalyses L-homoserine = 2-oxobutanoate + NH4(+). It catalyses the reaction L-selenocystathionine + H2O = L-selenocysteine + 2-oxobutanoate + NH4(+). It carries out the reaction L-cysteine + H2O = hydrogen sulfide + pyruvate + NH4(+) + H(+). The catalysed reaction is L-homocysteine + H2O = 2-oxobutanoate + hydrogen sulfide + NH4(+) + H(+). It participates in amino-acid biosynthesis; L-cysteine biosynthesis; L-cysteine from L-homocysteine and L-serine: step 2/2. Catalyzes the last step in the trans-sulfuration pathway from L-methionine to L-cysteine in a pyridoxal-5'-phosphate (PLP)-dependent manner, which consists on cleaving the L,L-cystathionine molecule into L-cysteine, ammonia and 2-oxobutanoate. Part of the L-cysteine derived from the trans-sulfuration pathway is utilized for biosynthesis of the ubiquitous antioxidant glutathione. Besides its role in the conversion of L-cystathionine into L-cysteine, it utilizes L-cysteine and L-homocysteine as substrates (at much lower rates than L,L-cystathionine) to produce hydrogen sulfide (H2S). In vitro, it converts two L-cysteine molecules into lanthionine and H2S, and two L-homocysteine molecules to homolanthionine and H2S, which can be particularly relevant under conditions of severe hyperhomocysteinemia. Lanthionine and homolanthionine are structural homologs of L,L-cystathionine that differ by the absence or presence of an extra methylene group, respectively. Acts as a cysteine-protein sulfhydrase by mediating sulfhydration of target proteins: sulfhydration consists of converting -SH groups into -SSH on specific cysteine residues of target proteins such as GAPDH, PTPN1 and NF-kappa-B subunit RELA, thereby regulating their function. By generating the gasotransmitter H2S, it participates in a number of physiological processes such as vasodilation, bone protection, and inflammation. Plays an essential role in myogenesis by contributing to the biogenesis of H2S in skeletal muscle tissue. Can also accept homoserine as substrate. Catalyzes the elimination of selenocystathionine (which can be derived from the diet) to yield selenocysteine, ammonia and 2-oxobutanoate. This chain is Cystathionine gamma-lyase (Cth), found in Rattus norvegicus (Rat).